The chain runs to 759 residues: uncharacterized protein (759 aa).

Disordered regions lie at residues 1 to 31 and 188 to 211; these read MDGN…TSFQ and NDEG…PFAN. Low complexity predominate over residues 17-31; that stretch reads LSPLQTSFPSSTSFQ. The span at 189–207 shows a compositional bias: acidic residues; it reads DEGEDVKDNEQDDNIDESD. Transmembrane regions (helical) follow at residues 434-454, 456-476, 486-505, 517-537, 555-575, 597-617, 620-640, 643-663, 670-690, and 726-746; these read YFRT…ILPM, FQGG…VGIL, MYNS…LSRA, FCFS…YIVL, MFYA…GAAL, DKWK…VNQA, SQWP…YFTA, FGSN…LGNI, GVAF…GLAA, and LVMV…ALVV.

It belongs to the ThrE exporter (TC 2.A.79) family.

Its subcellular location is the endoplasmic reticulum membrane. This is an uncharacterized protein from Schizosaccharomyces pombe (strain 972 / ATCC 24843) (Fission yeast).